The following is a 458-amino-acid chain: ATP synthase subunit beta (458 aa).

148 to 155 (GGAGVGKT) contributes to the ATP binding site.

Belongs to the ATPase alpha/beta chains family. As to quaternary structure, F-type ATPases have 2 components, CF(1) - the catalytic core - and CF(0) - the membrane proton channel. CF(1) has five subunits: alpha(3), beta(3), gamma(1), delta(1), epsilon(1). CF(0) has three main subunits: a(1), b(2) and c(9-12). The alpha and beta chains form an alternating ring which encloses part of the gamma chain. CF(1) is attached to CF(0) by a central stalk formed by the gamma and epsilon chains, while a peripheral stalk is formed by the delta and b chains.

It is found in the cell inner membrane. It catalyses the reaction ATP + H2O + 4 H(+)(in) = ADP + phosphate + 5 H(+)(out). Its function is as follows. Produces ATP from ADP in the presence of a proton gradient across the membrane. The catalytic sites are hosted primarily by the beta subunits. The protein is ATP synthase subunit beta of Francisella tularensis subsp. tularensis (strain FSC 198).